Here is a 340-residue protein sequence, read N- to C-terminus: 3-isopropylmalate dehydrogenase (340 aa).

Arg-88, Arg-98, Arg-122, and Asp-212 together coordinate substrate. Asp-212, Asp-236, and Asp-240 together coordinate Mg(2+). 272–284 is an NAD(+) binding site; sequence GSAPDIMGKGIAD.

Belongs to the isocitrate and isopropylmalate dehydrogenases family. LeuB type 2 subfamily. In terms of assembly, homodimer. Mg(2+) is required as a cofactor. It depends on Mn(2+) as a cofactor.

Its subcellular location is the cytoplasm. It catalyses the reaction (2R,3S)-3-isopropylmalate + NAD(+) = 4-methyl-2-oxopentanoate + CO2 + NADH. The protein operates within amino-acid biosynthesis; L-leucine biosynthesis; L-leucine from 3-methyl-2-oxobutanoate: step 3/4. Catalyzes the oxidation of 3-carboxy-2-hydroxy-4-methylpentanoate (3-isopropylmalate) to 3-carboxy-4-methyl-2-oxopentanoate. The product decarboxylates to 4-methyl-2 oxopentanoate. The protein is 3-isopropylmalate dehydrogenase of Corynebacterium efficiens (strain DSM 44549 / YS-314 / AJ 12310 / JCM 11189 / NBRC 100395).